The sequence spans 387 residues: Gamma-butyrobetaine dioxygenase (387 aa).

Residues C38, C40, C43, and H82 each contribute to the Zn(2+) site. Residues H202, D204, and H347 each coordinate Fe cation. At S351 the chain carries Phosphoserine.

The protein belongs to the gamma-BBH/TMLD family. The cofactor is Fe(2+). L-ascorbate serves as cofactor.

The protein resides in the cytoplasm. The catalysed reaction is 4-(trimethylamino)butanoate + 2-oxoglutarate + O2 = carnitine + succinate + CO2. It functions in the pathway amine and polyamine biosynthesis; carnitine biosynthesis. Functionally, catalyzes the formation of L-carnitine from gamma-butyrobetaine. The sequence is that of Gamma-butyrobetaine dioxygenase (BBOX1) from Pongo abelii (Sumatran orangutan).